Consider the following 279-residue polypeptide: Protoheme IX farnesyltransferase (279 aa).

9 consecutive transmembrane segments (helical) span residues 5 to 25, 33 to 53, 84 to 103, 108 to 125, 133 to 153, 159 to 179, 201 to 221, 222 to 242, and 256 to 276; these read LILLKPRVIWLLILASLAGYL, IAQAFSLLLVAFLSTGGAAAF, LAYSLVLSALGIALGFLLLG, LFVFLGWFFYAVVYTVIL, ILGGGFAGNATFLGGYALGAG, AVLISFAIYLWIPSHIWALAY, AAVAIISLLNLASAAYIMTLY, LAFGGGLLGGALVAAGVVATI, and AMWKMYKASSPVLTLFLLALI.

Belongs to the UbiA prenyltransferase family. Protoheme IX farnesyltransferase subfamily.

It is found in the cell membrane. It catalyses the reaction heme b + (2E,6E)-farnesyl diphosphate + H2O = Fe(II)-heme o + diphosphate. It functions in the pathway porphyrin-containing compound metabolism; heme O biosynthesis; heme O from protoheme: step 1/1. Functionally, converts heme B (protoheme IX) to heme O by substitution of the vinyl group on carbon 2 of heme B porphyrin ring with a hydroxyethyl farnesyl side group. The sequence is that of Protoheme IX farnesyltransferase from Pyrobaculum arsenaticum (strain DSM 13514 / JCM 11321 / PZ6).